A 1677-amino-acid polypeptide reads, in one-letter code: Zinc finger protein 831 (1677 aa).

Over residues 1 to 26 the composition is skewed to pro residues; that stretch reads MEVPEPTCPAPPARDQPAPTPGPPGA. The segment at 1–43 is disordered; it reads MEVPEPTCPAPPARDQPAPTPGPPGAPGGQASPHLTLGPVLLP. C2H2-type zinc fingers lie at residues 144-166 and 172-196; these read YLCP…IRSH and FPCA…TQTH. Disordered regions lie at residues 193–250, 270–398, 516–557, 663–931, 950–1062, 1100–1119, 1137–1176, 1216–1243, 1510–1597, and 1620–1677; these read TQTH…SPGA, GSAF…AGLE, WLEP…PSGH, EAAG…VLSA, TPLP…TCEA, NWEL…SGPL, LTRP…PFPS, LRDE…GPAQ, SAES…GQYG, and LITR…VIEI. Basic and acidic residues-rich tracts occupy residues 216-232 and 325-341; these read EGDK…RGES and KPWD…KCES. The span at 376 to 385 shows a compositional bias: gly residues; it reads EGGPGPGPGV. A coiled-coil region spans residues 391 to 423; that stretch reads GAREAGLELEKKRLEERIAQLISHNQAVVDDAQ. 4 stretches are compositionally biased toward basic and acidic residues: residues 517-526, 674-684, 707-727, and 813-834; these read LEPREPRDPW, QDRRTPVHEDI, PTKH…RVEE, and SGED…HSWK. Low complexity-rich tracts occupy residues 880 to 894 and 905 to 919; these read LESS…SVAL and PLHP…HPSL. Positions 1153 to 1170 are enriched in low complexity; it reads SSHSGTSRSHSTRSPHST. Residues 1518–1531 are compositionally biased toward polar residues; sequence QTAGRTLTSSSPDS. Over residues 1649 to 1662 the composition is skewed to basic and acidic residues; it reads RSLEGMRKQTRVEF.

The protein is Zinc finger protein 831 (ZNF831) of Homo sapiens (Human).